The primary structure comprises 708 residues: MISKYCRLSSPRSDLIIKTHPHAEIIWWGSALKHFSPDDCASLERPVANGRLDIDTPLTLIAENALGLFSSPGLEGHRNGLDASPVFYTVDVEHTENTLRLTSEDSVAGLRLVSELVMTPSGILKVRHALTNLREGDWQINRFAITLPVAERAEEVMAFHGRWTREFQPHRVRLTHDAFVLENRRGRTSHEHFPALIVGTPGFSEQQGEVWAVHLGWSGNHRMRCEAKTDGRRYVQAEALWMPGEKALRKNETLYTPWLYACHSADGLNGMSQQYHRFLRDEIIRFPEQKLRPVHLNTWEGIYFNHNPDYIMQMAERAAALGVERFIIDDGWFKGRNDDRAALGDWYTDEQKYPNGLMPVINHVKSLGMEFGIWVEPEMINPDSDLFRLHPDWILSMPGYSQPTGRYQYVLNLNIPEAFDYIYKRFLWLLGEHPVDYVKWDMNRELVQAGHEGRAAADAQTRQFYRLLDLLRERFPHVEFESCASGGGRIDFEVLKRTHRFWASDNNDALERCTIQRGMSYFFPPEVMGAHIGHRRCHATFRQHSIAFRGLTALFGHMGLELDPVAADAKESDGYRRYALLYKEWRQLIHTGVLWRVDMPDSSIQVQGVVSPDQSQALFMISQLAMPDYTLPGILRFPGLAAEVRYRLRVIDHPEIQLVGEGGHTMRRLPAWMNQPLEASGEWLAKGGIQLPVLDPESAILIALERAV.

The Nucleophile role is filled by Asp441. Residue Asp505 is the Proton donor of the active site.

Belongs to the glycosyl hydrolase 36 family. Homotetramer.

It catalyses the reaction Hydrolysis of terminal, non-reducing alpha-D-galactose residues in alpha-D-galactosides, including galactose oligosaccharides, galactomannans and galactolipids.. The chain is Alpha-galactosidase (rafA) from Escherichia coli.